The sequence spans 280 residues: Diaminopimelate epimerase (280 aa).

Asn11 and Asn64 together coordinate substrate. Cys73 (proton donor) is an active-site residue. Substrate is bound by residues Gly74–Asn75, Asn162, Asn195, and Glu213–Arg214. The active-site Proton acceptor is the Cys222. Gly223 to Thr224 contacts substrate.

It belongs to the diaminopimelate epimerase family. As to quaternary structure, homodimer.

Its subcellular location is the cytoplasm. It catalyses the reaction (2S,6S)-2,6-diaminopimelate = meso-2,6-diaminopimelate. Its pathway is amino-acid biosynthesis; L-lysine biosynthesis via DAP pathway; DL-2,6-diaminopimelate from LL-2,6-diaminopimelate: step 1/1. Catalyzes the stereoinversion of LL-2,6-diaminopimelate (L,L-DAP) to meso-diaminopimelate (meso-DAP), a precursor of L-lysine and an essential component of the bacterial peptidoglycan. The polypeptide is Diaminopimelate epimerase (Pelotomaculum thermopropionicum (strain DSM 13744 / JCM 10971 / SI)).